A 151-amino-acid chain; its full sequence is Large ribosomal subunit protein uL13 (151 aa).

Belongs to the universal ribosomal protein uL13 family. As to quaternary structure, part of the 50S ribosomal subunit.

This protein is one of the early assembly proteins of the 50S ribosomal subunit, although it is not seen to bind rRNA by itself. It is important during the early stages of 50S assembly. This Mycoplasma mycoides subsp. mycoides SC (strain CCUG 32753 / NCTC 10114 / PG1) protein is Large ribosomal subunit protein uL13.